The following is a 365-amino-acid chain: PHD finger protein 6 (365 aa).

An N-acetylserine modification is found at Ser-2. Short sequence motifs (nuclear localization signal) lie at residues 13 to 16 (RQRK) and 129 to 133 (RKHKK). The C2HC pre-PHD-type 1 zinc-finger motif lies at 14–52 (QRKCGFCKSNRDKECGQLLISENQKVAAHHKCMLFSSAL). The extended PHD1 domain (ePHD1) stretch occupies residues 14-132 (QRKCGFCKSN…IYMVYCRKHK (119 aa)). The segment at 80–132 (LMCSLCHCPGATIGCDVKTCHRTYHYHCALHDKAQIREKPSQGIYMVYCRKHK) adopts a PHD-type 1 zinc-finger fold. A phosphoserine mark is found at Ser-138, Ser-145, and Ser-155. Residues 139–211 (EADLEESFNE…RSSPSDTRPK (73 aa)) are disordered. Positions 157 to 169 (KSKKKSRKGRPRK) match the Nucleolar localization signal motif. The segment covering 157-171 (KSKKKSRKGRPRKTN) has biased composition (basic residues). Lys-173 is covalently cross-linked (Glycyl lysine isopeptide (Lys-Gly) (interchain with G-Cter in SUMO2)). Ser-183 and Ser-199 each carry phosphoserine. The segment at 209 to 249 (RPKCGFCHVGEEENEARGKLHIFNAKKAAAHYKCMLFSSGT) adopts a C2HC pre-PHD-type 2 zinc-finger fold. An extended PHD2 domain (ePHD2) region spans residues 209-330 (RPKCGFCHVG…IYKLYCKNHS (122 aa)). Lys-227 participates in a covalent cross-link: Glycyl lysine isopeptide (Lys-Gly) (interchain with G-Cter in SUMO2). The segment at 278–330 (MKCTLCSQPGATIGCEIKACVKTYHYHCGVQDKAKYIENMSRGIYKLYCKNHS) adopts a PHD-type 2 zinc-finger fold. The disordered stretch occupies residues 330–365 (SGNDERDEEDEERESKSRGKVEIDQQQLTQQQLNGN). The span at 342 to 352 (RESKSRGKVEI) shows a compositional bias: basic and acidic residues. The segment covering 354-365 (QQQLTQQQLNGN) has biased composition (low complexity). The residue at position 358 (Thr-358) is a Phosphothreonine.

Interacts with UBTF. Interacts with the NuRD complex component RBBP4 (via the nucleolar localization motif), the interaction mediates transcriptional repression activity.

It is found in the nucleus. It localises to the nucleolus. The protein resides in the chromosome. Its subcellular location is the centromere. The protein localises to the kinetochore. Its function is as follows. Transcriptional regulator that associates with ribosomal RNA promoters and suppresses ribosomal RNA (rRNA) transcription. The polypeptide is PHD finger protein 6 (PHF6) (Pongo abelii (Sumatran orangutan)).